Consider the following 104-residue polypeptide: MYAIFKNGGKQYKVVEGSIILLDKMSLEPKSKVELNEVLAIVDGDKTDVGTPFVKGAKIEAEVINEGRGKKVVTFKKRRRKDSKTKRGFRRDFTRVRILKIVAK.

Belongs to the bacterial ribosomal protein bL21 family. As to quaternary structure, part of the 50S ribosomal subunit. Contacts protein L20.

This protein binds to 23S rRNA in the presence of protein L20. This chain is Large ribosomal subunit protein bL21, found in Helicobacter hepaticus (strain ATCC 51449 / 3B1).